The chain runs to 356 residues: Trans-enoyl reductase pgmF (356 aa).

NADP(+)-binding positions include 57 to 60, 175 to 178, 198 to 201, Tyr216, 261 to 262, and 342 to 343; these read VDFK, SGGC, STPN, VG, and AK.

It belongs to the zinc-containing alcohol dehydrogenase family.

Functionally, FAD-linked oxidoreductase; part of the gene cluster that mediates the biosynthesis of pleosporalin A, ascomycone A, as well as a third cryptic naphthoquinone derived pigment, all responsible for the coloration of conidia. The pathway begins with the biosynthesis of the cyclized heptaketide 3-acetonyl-1,6,8-trihydroxy-2-naphthaldehyde by the NR-PKS pgmA. The C-6 hydroxyl group is further methylated by the O-methyltransferase pgmB to yield fusarubinaldehyde which is in turn oxidized by the cytochrome P450 monooxygenase pgmC at C-9. The C-1 hydroxyl group is then methylated spontaneously. Although pgmE, pgmD and pgmH are essential for the production of pleosporalin A, it is not the case for the 2 other final products and it remains difficult to assign a specific function to each enzyme. PgmF and pgmG seem not to be involved in pigment biosynthesis although they were regulated by the cluster-specific transcription factor pgmR. The protein is Trans-enoyl reductase pgmF of Aspergillus terreus (strain NIH 2624 / FGSC A1156).